We begin with the raw amino-acid sequence, 555 residues long: Vetispiradiene synthase 1 (555 aa).

Mg(2+)-binding residues include Asp-308, Asp-312, Asp-451, Thr-455, and Glu-459. The DDXXD motif motif lies at 308-312; sequence DDTFD.

This sequence belongs to the terpene synthase family. Tpsa subfamily. The cofactor is Mg(2+).

The protein resides in the cytoplasm. The catalysed reaction is (2E,6E)-farnesyl diphosphate = (-)-vetispiradiene + diphosphate. It participates in secondary metabolite biosynthesis; terpenoid biosynthesis. In terms of biological role, sesquiterpene synthase that catalyzes the formation of vetispiradiene from trans,trans-farnesyl diphosphate. The initial internal cyclization produces the monocyclic intermediate germacrene A. This is Vetispiradiene synthase 1 from Hyoscyamus muticus (Egyptian henbane).